A 417-amino-acid chain; its full sequence is NADH-quinone oxidoreductase subunit D (417 aa).

Belongs to the complex I 49 kDa subunit family. NDH-1 is composed of 14 different subunits. Subunits NuoB, C, D, E, F, and G constitute the peripheral sector of the complex.

It localises to the cell inner membrane. It carries out the reaction a quinone + NADH + 5 H(+)(in) = a quinol + NAD(+) + 4 H(+)(out). In terms of biological role, NDH-1 shuttles electrons from NADH, via FMN and iron-sulfur (Fe-S) centers, to quinones in the respiratory chain. The immediate electron acceptor for the enzyme in this species is believed to be ubiquinone. Couples the redox reaction to proton translocation (for every two electrons transferred, four hydrogen ions are translocated across the cytoplasmic membrane), and thus conserves the redox energy in a proton gradient. The protein is NADH-quinone oxidoreductase subunit D of Burkholderia multivorans (strain ATCC 17616 / 249).